Reading from the N-terminus, the 564-residue chain is 3beta-hydroxysteroid-dehydrogenase/decarboxylase isoform 2 (564 aa).

16–21 provides a ligand contact to NAD(+); that stretch reads GGRGFA. N-linked (GlcNAc...) asparagine glycans are attached at residues Asn-146 and Asn-158. The NAD(+) site is built by Tyr-161 and Lys-165. The active-site Proton donor is Lys-165. Residues 384–564 enclose the Reticulon domain; that stretch reads VADTLLWKDL…EKLFGSKKHD (181 aa). The next 2 membrane-spanning stretches (helical) occupy residues 398-418 and 424-444; these read IAIFILISIYYNFVATGSTVV and ALLVASVFLFLHGILPEKIFG. An N-linked (GlcNAc...) asparagine glycan is attached at Asn-474. The next 2 helical transmembrane spans lie at 486 to 506 and 507 to 527; these read GNDWSFFFKVVFVLLALSLAG and AISLHSIFVIGLPIAFLAFLV.

The protein belongs to the 3-beta-HSD family.

It localises to the endoplasmic reticulum membrane. It carries out the reaction a 3beta-hydroxysteroid-4alpha-carboxylate + NAD(+) = a 3-oxosteroid + CO2 + NADH. The catalysed reaction is 4alpha-carboxy-4beta,14alpha-dimethyl-9beta,19-cyclo-5alpha-ergost-24(24(1))-en-3beta-ol + NAD(+) = cycloeucalenone + CO2 + NADH. Its pathway is steroid biosynthesis; zymosterol biosynthesis; zymosterol from lanosterol: step 4/6. 3beta-hydroxysteroid-dehydrogenase/decarboxylase involved in sterol synthesis. Catalyzes the formation of 3-oxosteroids from 3beta-hydroxysteroids-4alpha-carboxylate. Involved in the regulation of inflorescence internodes and leaves growth, probably by affecting auxin transporter activity possibly by altering sterol composition in the membranes. In Arabidopsis thaliana (Mouse-ear cress), this protein is 3beta-hydroxysteroid-dehydrogenase/decarboxylase isoform 2.